The primary structure comprises 424 residues: Serine--tRNA ligase (424 aa).

An L-serine-binding site is contributed by 230–232; it reads TAE. 261–263 contacts ATP; that stretch reads RSE. Glutamate 284 lines the L-serine pocket. 348–351 is a binding site for ATP; the sequence is EISS. Serine 384 provides a ligand contact to L-serine.

It belongs to the class-II aminoacyl-tRNA synthetase family. Type-1 seryl-tRNA synthetase subfamily. Homodimer. The tRNA molecule binds across the dimer.

The protein localises to the cytoplasm. The enzyme catalyses tRNA(Ser) + L-serine + ATP = L-seryl-tRNA(Ser) + AMP + diphosphate + H(+). The catalysed reaction is tRNA(Sec) + L-serine + ATP = L-seryl-tRNA(Sec) + AMP + diphosphate + H(+). It functions in the pathway aminoacyl-tRNA biosynthesis; selenocysteinyl-tRNA(Sec) biosynthesis; L-seryl-tRNA(Sec) from L-serine and tRNA(Sec): step 1/1. Functionally, catalyzes the attachment of serine to tRNA(Ser). Is also able to aminoacylate tRNA(Sec) with serine, to form the misacylated tRNA L-seryl-tRNA(Sec), which will be further converted into selenocysteinyl-tRNA(Sec). The chain is Serine--tRNA ligase from Streptococcus pneumoniae (strain 70585).